A 500-amino-acid polypeptide reads, in one-letter code: Glycerol kinase (500 aa).

Thr-13 is an ADP binding site. Residues Thr-13, Thr-14, and Ser-15 each coordinate ATP. Thr-13 is a sn-glycerol 3-phosphate binding site. An ADP-binding site is contributed by Arg-17. 4 residues coordinate sn-glycerol 3-phosphate: Arg-83, Glu-84, Tyr-135, and Asp-244. 5 residues coordinate glycerol: Arg-83, Glu-84, Tyr-135, Asp-244, and Gln-245. ADP is bound by residues Thr-266, Gly-309, Gly-410, and Asn-414. 3 residues coordinate ATP: Thr-266, Gly-309, and Gly-410.

It belongs to the FGGY kinase family.

The enzyme catalyses glycerol + ATP = sn-glycerol 3-phosphate + ADP + H(+). The protein operates within polyol metabolism; glycerol degradation via glycerol kinase pathway; sn-glycerol 3-phosphate from glycerol: step 1/1. Its activity is regulated as follows. Inhibited by fructose 1,6-bisphosphate (FBP). In terms of biological role, key enzyme in the regulation of glycerol uptake and metabolism. Catalyzes the phosphorylation of glycerol to yield sn-glycerol 3-phosphate. The polypeptide is Glycerol kinase (Chromobacterium violaceum (strain ATCC 12472 / DSM 30191 / JCM 1249 / CCUG 213 / NBRC 12614 / NCIMB 9131 / NCTC 9757 / MK)).